A 123-amino-acid polypeptide reads, in one-letter code: Small ribosomal subunit protein eS8 (123 aa).

The tract at residues 1–37 (MKDQGRSTRKRTGGRLKHASNKKRHQLGREPAETTVG) is disordered. Residues 7 to 26 (STRKRTGGRLKHASNKKRHQ) are compositionally biased toward basic residues.

This sequence belongs to the eukaryotic ribosomal protein eS8 family. As to quaternary structure, part of the 30S ribosomal subunit.

This chain is Small ribosomal subunit protein eS8, found in Halorubrum lacusprofundi (strain ATCC 49239 / DSM 5036 / JCM 8891 / ACAM 34).